The primary structure comprises 120 residues: Large ribosomal subunit protein uL24 (120 aa).

Residues 1 to 33 form a disordered region; it reads MTRQPHKQRNRQERAALHEKQKQVRAPLSPELR. Residues 10–22 show a composition bias toward basic and acidic residues; it reads NRQERAALHEKQK.

The protein belongs to the universal ribosomal protein uL24 family. Part of the 50S ribosomal subunit.

One of two assembly initiator proteins, it binds directly to the 5'-end of the 23S rRNA, where it nucleates assembly of the 50S subunit. Functionally, located at the polypeptide exit tunnel on the outside of the subunit. In Natronomonas pharaonis (strain ATCC 35678 / DSM 2160 / CIP 103997 / JCM 8858 / NBRC 14720 / NCIMB 2260 / Gabara) (Halobacterium pharaonis), this protein is Large ribosomal subunit protein uL24.